We begin with the raw amino-acid sequence, 382 residues long: D-galactonate dehydratase (382 aa).

Residue Asp183 coordinates Mg(2+). His185 (proton donor) is an active-site residue. Glu209 and Glu235 together coordinate Mg(2+). Catalysis depends on His285, which acts as the Proton acceptor.

This sequence belongs to the mandelate racemase/muconate lactonizing enzyme family. GalD subfamily. Mg(2+) is required as a cofactor.

The enzyme catalyses D-galactonate = 2-dehydro-3-deoxy-D-galactonate + H2O. Its pathway is carbohydrate acid metabolism; D-galactonate degradation; D-glyceraldehyde 3-phosphate and pyruvate from D-galactonate: step 1/3. Functionally, catalyzes the dehydration of D-galactonate to 2-keto-3-deoxy-D-galactonate. This is D-galactonate dehydratase from Salmonella dublin (strain CT_02021853).